A 620-amino-acid chain; its full sequence is Acetylcholinesterase 1 (620 aa).

The first 31 residues, 1–31, serve as a signal peptide directing secretion; that stretch reads MRYSLLFFIFLPCVITAVDLIHLHDGSPLFG. The N-linked (GlcNAc...) asparagine glycan is linked to Asn-74. A disulfide bond links Cys-82 and Cys-109. Residue Ser-216 is the Acyl-ester intermediate of the active site. A disulfide bridge connects residues Cys-270 and Cys-286. N-linked (GlcNAc...) asparagine glycosylation occurs at Asn-272. Active-site charge relay system residues include Glu-346 and His-468. A disulfide bond links Cys-430 and Cys-558. Asn-486 and Asn-536 each carry an N-linked (GlcNAc...) asparagine glycan.

This sequence belongs to the type-B carboxylesterase/lipase family. In terms of assembly, oligomer composed of disulfide-linked homodimers.

The protein resides in the synapse. It is found in the secreted. It localises to the cell membrane. The catalysed reaction is acetylcholine + H2O = choline + acetate + H(+). Rapidly hydrolyzes choline released into the synapse. The protein is Acetylcholinesterase 1 (ace-1) of Caenorhabditis briggsae.